The sequence spans 414 residues: Esterase FrsA (414 aa).

This sequence belongs to the FrsA family.

It catalyses the reaction a carboxylic ester + H2O = an alcohol + a carboxylate + H(+). Functionally, catalyzes the hydrolysis of esters. In Shigella sonnei (strain Ss046), this protein is Esterase FrsA.